A 248-amino-acid chain; its full sequence is Probable transcriptional regulatory protein Nwi_2729 (248 aa).

A disordered region spans residues 1–21; that stretch reads MAGHSQFKNIMHRKGRQDAQK.

This sequence belongs to the TACO1 family.

Its subcellular location is the cytoplasm. This chain is Probable transcriptional regulatory protein Nwi_2729, found in Nitrobacter winogradskyi (strain ATCC 25391 / DSM 10237 / CIP 104748 / NCIMB 11846 / Nb-255).